We begin with the raw amino-acid sequence, 535 residues long: Probable lipid II flippase MurJ (535 aa).

A run of 12 helical transmembrane segments spans residues 90–110 (VLFT…PFIV), 131–151 (FATI…MAGM), 159–179 (FAAA…LAYA), 192–212 (DLSW…WVAV), 233–253 (LLVL…NLLI), 274–294 (IYQL…LPEL), 316–336 (FTLF…EPIV), 350–370 (TVVV…FVLI), 388–408 (IFAG…FPSL), 413–433 (IATA…ATLV), 451–471 (LVIA…WLAF), and 484–504 (LTLC…AFGI).

This sequence belongs to the MurJ/MviN family.

Its subcellular location is the cell inner membrane. It participates in cell wall biogenesis; peptidoglycan biosynthesis. In terms of biological role, involved in peptidoglycan biosynthesis. Transports lipid-linked peptidoglycan precursors from the inner to the outer leaflet of the cytoplasmic membrane. The sequence is that of Probable lipid II flippase MurJ from Rhizobium meliloti (strain 1021) (Ensifer meliloti).